The primary structure comprises 262 residues: Dihydroorotate dehydrogenase B (NAD(+)), electron transfer subunit (262 aa).

The 101-residue stretch at 2–102 folds into the FAD-binding FR-type domain; sequence SKVFDAKVLA…MGPLGRGFTL (101 aa). FAD-binding positions include 53 to 56, 70 to 72, and 77 to 78; these read RPIS, LFR, and GT. 4 residues coordinate [2Fe-2S] cluster: Cys-224, Cys-229, Cys-232, and Cys-248.

This sequence belongs to the PyrK family. Heterotetramer of 2 PyrK and 2 PyrD type B subunits. However, the metal reductase complex seems to be composed of a heterooctamer of 4 PyrK and 4 PyrD subunits. FAD serves as cofactor. Requires [2Fe-2S] cluster as cofactor.

The protein localises to the cytoplasm. Its pathway is pyrimidine metabolism; UMP biosynthesis via de novo pathway; orotate from (S)-dihydroorotate (NAD(+) route): step 1/1. Its function is as follows. Responsible for channeling the electrons from the oxidation of dihydroorotate from the FMN redox center in the PyrD type B subunit to the ultimate electron acceptor NAD(+). In terms of biological role, together with PyrD, also forms a metal reductase complex able to reduce Fe(III)-chelates to Fe(II)-chelates, as well as soluble Cr(VI) and U(VI), using NADH as electron donor. To a lesser extent, can also use NADPH as an electron donor. Is unable to reduce riboflavin and FMN with NADH as electron donor. May have an in vivo role in metal reduction in D.reducens, which is an organism capable of reducing contaminant heavy metals and radionuclides. The sequence is that of Dihydroorotate dehydrogenase B (NAD(+)), electron transfer subunit from Desulforamulus reducens (strain ATCC BAA-1160 / DSM 100696 / MI-1) (Desulfotomaculum reducens).